Consider the following 315-residue polypeptide: UDP-N-acetylenolpyruvoylglucosamine reductase (315 aa).

One can recognise an FAD-binding PCMH-type domain in the interval 27–207 (RVGGPADVLY…TKRMNAITAR (181 aa)). The active site involves Arg172. The tract at residues 214-236 (IREKTSGSTFANPDPPGTPNQRK) is disordered. Catalysis depends on Ser221, which acts as the Proton donor. Residue Glu297 is part of the active site.

The protein belongs to the MurB family. FAD serves as cofactor.

It is found in the cytoplasm. The enzyme catalyses UDP-N-acetyl-alpha-D-muramate + NADP(+) = UDP-N-acetyl-3-O-(1-carboxyvinyl)-alpha-D-glucosamine + NADPH + H(+). It functions in the pathway cell wall biogenesis; peptidoglycan biosynthesis. Its function is as follows. Cell wall formation. This chain is UDP-N-acetylenolpyruvoylglucosamine reductase, found in Maricaulis maris (strain MCS10) (Caulobacter maris).